Reading from the N-terminus, the 970-residue chain is Unconventional myosin-XIX (970 aa).

The region spanning Tyr35 to Ala758 is the Myosin motor domain. Gly132–Thr139 contributes to the ATP binding site. The tract at residues Leu602–Ser624 is actin-binding. Ser685 carries the phosphoserine modification. IQ domains follow at residues Arg759–Glu779 and Gln783–Val812. The tract at residues Met824–Gly970 is myMOMA region.

It belongs to the TRAFAC class myosin-kinesin ATPase superfamily. Myosin family. Myosin is a hexamer of 2 heavy chains and 4 light chains: interacts with myosin light chains MYL9 and MYL12B. In terms of tissue distribution, widely expressed in multiple tissues and cell lines.

The protein resides in the mitochondrion outer membrane. Its subcellular location is the cytoplasm. The protein localises to the cytoskeleton. Its function is as follows. Actin-based motor molecule with ATPase activity that localizes to the mitochondrion outer membrane. Motor protein that moves towards the plus-end of actin filaments. Required for mitochondrial inheritance during mitosis. May be involved in mitochondrial transport or positioning. This chain is Unconventional myosin-XIX, found in Homo sapiens (Human).